The sequence spans 605 residues: Ras guanine nucleotide exchange factor A (605 aa).

Residues 67–99 (DKTAIIQLILQHLSTKGLKQTKQTLEKEARTTT) form the LisH domain. Positions 198-320 (DDEVVKFASL…SLTKMVEKLS (123 aa)) constitute an N-terminal Ras-GEF domain. Residues 353-597 (DEEEIARQLT…YRESLKREPK (245 aa)) enclose the Ras-GEF domain.

As to quaternary structure, component of the Sca1 complex composed of at least gefA, gefH, scaA, phr, and the protein phosphatase 2A subunits pppA and pho2B. Interacts directly with gefH.

It is found in the cell membrane. Ras-bound GDP/GTP exchange factor required for normal activation of adenylyl cyclase. Component of the Sca1 complex, a regulator of cell motility, chemotaxis and signal relay. The Sca1 complex is recruited to the plasma membrane in a chemoattractant- and F-actin-dependent manner and is enriched at the leading edge of chemotaxing cells where it regulates F-actin dynamics and signal relay by controlling the activation of rasC and the downstream target of rapamycin complex 2 (TORC2)-Akt/protein kinase B (PKB) pathway. This chain is Ras guanine nucleotide exchange factor A (gefA), found in Dictyostelium discoideum (Social amoeba).